The following is a 127-amino-acid chain: MFLTMMKGKIHRATVTEANLNYVGSITIDEELLDASGILPNEKVQVVNINNGARLETYTIPGPRGSGIISLNGAAARLCQIGDKVIIIAYALMEEKEAKQWQPKVVFVDEYNKIVKIKEKEIHGQTE.

The active-site Schiff-base intermediate with substrate; via pyruvic acid is serine 25. Serine 25 is modified (pyruvic acid (Ser)). Substrate is bound at residue threonine 57. Tyrosine 58 acts as the Proton donor in catalysis. Position 73–75 (73–75 (GAA)) interacts with substrate.

The protein belongs to the PanD family. As to quaternary structure, heterooctamer of four alpha and four beta subunits. Pyruvate is required as a cofactor. Post-translationally, is synthesized initially as an inactive proenzyme, which is activated by self-cleavage at a specific serine bond to produce a beta-subunit with a hydroxyl group at its C-terminus and an alpha-subunit with a pyruvoyl group at its N-terminus.

The protein resides in the cytoplasm. It catalyses the reaction L-aspartate + H(+) = beta-alanine + CO2. It participates in cofactor biosynthesis; (R)-pantothenate biosynthesis; beta-alanine from L-aspartate: step 1/1. Functionally, catalyzes the pyruvoyl-dependent decarboxylation of aspartate to produce beta-alanine. The sequence is that of Aspartate 1-decarboxylase from Carboxydothermus hydrogenoformans (strain ATCC BAA-161 / DSM 6008 / Z-2901).